A 428-amino-acid polypeptide reads, in one-letter code: Spliceosome RNA helicase DDX39B (428 aa).

The segment covering 1-19 (MAENDVDNELLDYEDDEVE) has biased composition (acidic residues). Residues 1 to 31 (MAENDVDNELLDYEDDEVETAAGGDGAEAPA) are disordered. Residue alanine 2 is modified to N-acetylalanine. An N6-acetyllysine; alternate modification is found at lysine 36. Residue lysine 36 forms a Glycyl lysine isopeptide (Lys-Gly) (interchain with G-Cter in SUMO2); alternate linkage. Phosphoserine is present on residues serine 38 and serine 41. The short motif at 45–73 (SGFRDFLLKPELLRAIVDCGFEHPSEVQH) is the Q motif element. The Helicase ATP-binding domain occupies 76 to 249 (IPQAILGMDV…RKFMQDPMEI (174 aa)). ATP is bound at residue 89–96 (AKSGMGKT). The residue at position 172 (threonine 172) is a Phosphothreonine. A DECD box motif is present at residues 196–199 (DECD). The Helicase C-terminal domain maps to 261–422 (GLQQYYVKLK…ELPDEIDISS (162 aa)).

The protein belongs to the DEAD box helicase family. DECD subfamily. In terms of assembly, homodimer, and heterodimer with DDX39A. DDX39B interacts with the THO subcomplex to form the THO-DDX39B complex which multimerizes into a 28-subunit tetrameric assembly. Component of the transcription/export (TREX) complex at least composed of ALYREF/THOC4, DDX39B, SARNP/CIP29, CHTOP and the THO subcomplex; in the complex interacts with THOC2. THOC1-THOC2-THOC3-DDX39B subcomplex is sufficient for the interaction with export factor NXF1-NXT1. TREX seems to have a dynamic structure involving ATP-dependent remodeling. Within the TREX complex bridges ALYREF/THOC4 and the THO subcomplex, and, in a ATP-dependent manner, ALYREF/THOC4 and SARNP/CIP29. Component of the spliceosome. Interacts directly with U2AF2. Interacts with RBM8A, RNPS1 and SRRM1, FYTTD1/UIF, THOC1, MX1 and POLDIP3. Interacts with LUZP4. Interacts with SARNP/CIP29 (via the C-terminal domain); the interaction is direct and facilitates RNA binding of DDX39B.

Its subcellular location is the nucleus. The protein resides in the nucleus speckle. The protein localises to the cytoplasm. It catalyses the reaction ATP + H2O = ADP + phosphate + H(+). Functionally, involved in nuclear export of spliced and unspliced mRNA. Component of the TREX complex which is thought to couple mRNA transcription, processing and nuclear export, and specifically associates with spliced mRNA and not with unspliced pre-mRNA. The TREX complex is recruited to spliced mRNAs by a transcription-independent mechanism, binds to mRNA upstream of the exon-junction complex (EJC) and is recruited in a splicing- and cap-dependent manner to a region near the 5' end of the mRNA where it functions in mRNA export to the cytoplasm via the TAP/NXF1 pathway. The THOC1-THOC2-THOC3 core complex alone is sufficient to promote ATPase activity of DDX39B; in the complex THOC2 is the only component that directly interacts with DDX39B. Associates with SARNP/CIP29, which facilitates RNA binding of DDX39B and likely plays a role in mRNA export. May undergo several rounds of ATP hydrolysis during assembly of TREX to drive subsequent loading of components such as ALYREF/THOC4 and CHTOP onto mRNA. Also associates with pre-mRNA independent of ALYREF/THOC4. Involved in the nuclear export of intronless mRNA; the ATP-bound form is proposed to recruit export adapter ALYREF/THOC4 to intronless mRNA; its ATPase activity is cooperatively stimulated by RNA and ALYREF/THOC4 and ATP hydrolysis is thought to trigger the dissociation from RNA to allow the association of ALYREF/THOC4 and the NXF1-NXT1 heterodimer. Involved in transcription elongation and genome stability. Its function is as follows. Splice factor that is required for the first ATP-dependent step in spliceosome assembly and for the interaction of U2 snRNP with the branchpoint. Has both RNA-stimulated ATP binding/hydrolysis activity and ATP-dependent RNA unwinding activity. Even with the stimulation of RNA, the ATPase activity is weak. Can only hydrolyze ATP but not other NTPs. The RNA stimulation of ATPase activity does not have a strong preference for the sequence and length of the RNA. However, ssRNA stimulates the ATPase activity much more strongly than dsRNA. Can unwind 5' or 3' overhangs or blunt end RNA duplexes in vitro. The ATPase and helicase activities are not influenced by U2AF2; the effect of ALYREF/THOC4 is reported conflictingly. The sequence is that of Spliceosome RNA helicase DDX39B (DDX39B) from Bos taurus (Bovine).